Reading from the N-terminus, the 124-residue chain is Pal-related lipoprotein (124 aa).

Positions 1–18 (MRYRAVFPMLIIVFALSG) are cleaved as a signal peptide. Cys-19 is lipidated: N-palmitoyl cysteine. Cys-19 carries the S-diacylglycerol cysteine lipid modification.

The protein resides in the cell membrane. The sequence is that of Pal-related lipoprotein (slp) from Bacillus subtilis (strain 168).